The following is a 129-amino-acid chain: Small ribosomal subunit protein uS8c (129 aa).

It belongs to the universal ribosomal protein uS8 family. In terms of assembly, part of the 30S ribosomal subunit.

It localises to the plastid. The protein resides in the chloroplast. Functionally, one of the primary rRNA binding proteins, it binds directly to 16S rRNA central domain where it helps coordinate assembly of the platform of the 30S subunit. This is Small ribosomal subunit protein uS8c (rps8) from Nephroselmis olivacea (Green alga).